The chain runs to 191 residues: Outer membrane lipoprotein DolP (191 aa).

An N-terminal signal peptide occupies residues 1–18 (MKAFSPLAVLISALLLQG). The N-palmitoyl cysteine moiety is linked to residue cysteine 19. Residue cysteine 19 is the site of S-diacylglycerol cysteine attachment. BON domains lie at 46–115 (DDGT…RQGQ) and 124–191 (NDTW…TYIK).

The protein belongs to the lipoprotein DolP family.

The protein resides in the cell outer membrane. In terms of biological role, plays an important role in maintaining outer membrane integrity. Contributes to virulence. The chain is Outer membrane lipoprotein DolP from Salmonella typhimurium (strain LT2 / SGSC1412 / ATCC 700720).